The primary structure comprises 136 residues: MNKLAIEIVTPNGSIYSETEAELIVLQTESGEMGVMAGHIPTVAPLKIGAVRVTKPGNDKDYIAVTEGFAEIRPQQVSVLVQAAEQAEGIDIERAKESLKRAEARLNEDKAAHVDFHRAERALHRAINRIEVAKFR.

The protein belongs to the ATPase epsilon chain family. In terms of assembly, F-type ATPases have 2 components, CF(1) - the catalytic core - and CF(0) - the membrane proton channel. CF(1) has five subunits: alpha(3), beta(3), gamma(1), delta(1), epsilon(1). CF(0) has three main subunits: a, b and c.

The protein localises to the cell membrane. Functionally, produces ATP from ADP in the presence of a proton gradient across the membrane. The polypeptide is ATP synthase epsilon chain (Macrococcus caseolyticus (strain JCSC5402) (Macrococcoides caseolyticum)).